The following is a 420-amino-acid chain: Transmembrane protease serine 11B-like protein (420 aa).

Topologically, residues M1–W19 are cytoplasmic. Residues M20 to V40 form a helical; Signal-anchor for type II membrane protein membrane-spanning segment. The Extracellular segment spans residues H41 to I420. Residues K48–K165 form the SEA domain. 2 N-linked (GlcNAc...) asparagine glycosylation sites follow: N111 and N146. The 231-residue stretch at I189–G419 folds into the Peptidase S1 domain. C214 and C230 are disulfide-bonded. H229 serves as the catalytic Charge relay system. An N-linked (GlcNAc...) asparagine glycan is attached at N239. D274 serves as the catalytic Charge relay system. Cystine bridges form between C339/C355 and C366/C395. S370 serves as the catalytic Charge relay system.

This sequence belongs to the peptidase S1 family.

The protein localises to the membrane. It localises to the cell membrane. With respect to regulation, inhibited by aprotinin, leupeptin, benzamidine, SERPINA1, SPINT1 and SPINT2. Its function is as follows. Serine protease. In Rattus norvegicus (Rat), this protein is Transmembrane protease serine 11B-like protein (Tmprss11bnl).